A 90-amino-acid polypeptide reads, in one-letter code: Chaplin-G (90 aa).

The first 27 residues, 1–27 (MSRIAKAAGVALGTGAVVLSGTGMAMA), serve as a signal peptide directing secretion. In terms of domain architecture, Chaplin spans 38-78 (SPGVLSGNVVQVPVHVPVNLCGNTIDVIGLLNPAFGNACEN). A disulfide bridge connects residues cysteine 58 and cysteine 76.

Belongs to the chaplin family. Short chaplin subfamily.

It is found in the cell surface. The protein localises to the secreted. It localises to the cell wall. In terms of biological role, one of 8 partially redundant surface-active proteins required for efficient formation of aerial mycelium; the short chaplins assemble into a hydrophobic, amyloidal fibrillar surface layer that envelopes and protects aerial hyphae and spores, presumably anchored to the long chaplins. Chaplins have an overlapping function with the surface-active SapB peptide; chaplins are essential on minimal medium while on rich medium both chaplins and SapB are required for efficient aerial hyphae formation. Chaplins are also involved in cell attachment to a hydrophobic surface. Forms amyloid fibrils in vitro probably composed of stacked beta-sheets, at low extracellular concentrations individually restores the ability to form aerial hyphae to a chaplin-deficient strain. A small chaplin extract (ChpD, ChpE, ChpF, ChpG and ChpH) self-assembles into 2 different amyloids; small fibrils at the air-water interface form an amphipathic membrane that resembles spore-surface structures involved in aerial hyphae formation, and hydrophilic fibrils in solution that resemble the fibers that attach cells to a hydrophobic surface. At the air-water interface the hydrophilic surface is in contact with water (probably equivalent to the peptidoglycan layer), while the hydrophobic face is exposed to the air, making the surface of the aerial hyphae hydrophobic. A small chaplin extract applied to a chaplin-deficient strain restores aerial hyphae formation. The small chaplin extract forms an amyloid-like structure similar to that seen on the surface of cells without rodlets (rdlA-rdlB deletions), and is highly surface active, reducing surface tension from 72 to 26 mJ/m(2), which probably allows escape of hyphae from an aqueous environment into air. ChpF and ChpG are sufficient to restore the rodlet layer and hydrophobicity to a strain deleted for the other 6 chaplin genes. The sequence is that of Chaplin-G from Streptomyces coelicolor (strain ATCC BAA-471 / A3(2) / M145).